We begin with the raw amino-acid sequence, 179 residues long: Transcriptional regulator ICP22 homolog (179 aa).

The span at 1-12 (MSRDRDRARPDT) shows a compositional bias: basic and acidic residues. Residues 1 to 40 (MSRDRDRARPDTRLSSSDNESDDEDYQLPHSHPEYGSDSS) form a disordered region.

It belongs to the herpesviridae ICP22 family.

The chain is Transcriptional regulator ICP22 homolog (MDV088) from Gallid herpesvirus 2 (strain Chicken/Md5/ATCC VR-987) (GaHV-2).